The chain runs to 547 residues: Cytochrome P450 78A1 (547 aa).

The segment covering 84 to 94 has biased composition (low complexity); the sequence is ASSRCPGAAAP. Residues 84–104 are disordered; sequence ASSRCPGAAAPRPRRDGPRRR. Residue cysteine 490 coordinates heme.

It belongs to the cytochrome P450 family. The cofactor is heme. In terms of tissue distribution, shoot apex.

This chain is Cytochrome P450 78A1 (CYP78A1), found in Zea mays (Maize).